Reading from the N-terminus, the 57-residue chain is uncharacterized protein (57 aa).

Functionally, proetin of unknown function whose overexpression causes growth inhibition. Overexpression increases the expression of ergosterol synthesis genes. This is an uncharacterized protein from Saccharomyces cerevisiae (strain ATCC 204508 / S288c) (Baker's yeast).